The following is a 348-amino-acid chain: WRKY transcription factor WRKY71 (348 aa).

Residues 50–84 (VAALEAELKRMGAENRQLSEMLAAVAAKYEALQSQ) adopt a coiled-coil conformation. 2 disordered regions span residues 91–141 (ASAN…APHH) and 246–287 (GEHN…APVV). Residues 102–114 (NQSSTSEGGSVSP) are compositionally biased toward low complexity. The Nuclear localization signal motif lies at 116–122 (RKRKSES). Over residues 126 to 136 (SPPPPPPPHPH) the composition is skewed to pro residues. The WRKY DNA-binding region spans 187–253 (DLSLVVKDGY…YEGEHNHGQP (67 aa)). The transcription repression of gibberellic acid (GA)-induced promoters stretch occupies residues 267–348 (SGKSAGKPPH…RILELSPTKD (82 aa)). The segment covering 275–286 (PHAPAAAPPAPV) has biased composition (pro residues).

Belongs to the WRKY group II-a family. Interacts with WRKY51; this interaction promotes W box binding of the complex WRKY51/WRKY71 in a zinc ion-dependent manner. Highly expressed in aleurone cells. In seeds, predominantly present in the plumule, radicle and scutellum of the embryo. Expressed in roots, stems, young leaves and spikelets.

It is found in the nucleus. Functionally, transcription repressor. Interacts specifically with the W box (5'-(T)TGAC[CT]-3'), a frequently occurring elicitor-responsive cis-acting element. Represses specifically gibberellic acid (GA)-induced promoters in aleurone cells, probably by interfering with GAM1. Regulates, probably indirectly, the activation of defense-related genes such as GF14E during defense response. Modulates plant innate immunity against X.oryzae pv. oryzae (Xoo). Confers resistance to the virulent bacterial pathogen X.oryzae pv. oryzae (Xoo) 13751, probably via the regulation of NPR1 and PR1b defense signaling pathways. This Oryza sativa subsp. indica (Rice) protein is WRKY transcription factor WRKY71.